The chain runs to 325 residues: MTAEVTAADAEVLLAQPRGFCAGVDRAIDIVERALELHGAPIYVRHEIVHNRYVVEDLRGKGAVFIDELDQAPAGAIVVFSAHGVSQAVRGEAEARGLRVFDATCPLVTKVHIEVARMRAAGREIVMIGHKGHPEVEGTLGQAQGGMYLVETVEDVAALQVSDPGNLAYVTQTTLSVDDAAAVAGALKARFPGIVEPKKSDICYATQNRQDAVKLLAPECDLVLVVGSTNSSNSNRLREVAERKGVAAYLIDGAHAIDPAWLQGRRSIGITAGASAPEVLVQQVVERVRELGAVSVRTMPGLEESVAFPLPKGLSRKIAQTESLE.

A [4Fe-4S] cluster-binding site is contributed by cysteine 21. (2E)-4-hydroxy-3-methylbut-2-enyl diphosphate is bound by residues histidine 50 and histidine 83. 2 residues coordinate dimethylallyl diphosphate: histidine 50 and histidine 83. Isopentenyl diphosphate contacts are provided by histidine 50 and histidine 83. Cysteine 105 serves as a coordination point for [4Fe-4S] cluster. A (2E)-4-hydroxy-3-methylbut-2-enyl diphosphate-binding site is contributed by histidine 133. Position 133 (histidine 133) interacts with dimethylallyl diphosphate. Histidine 133 contacts isopentenyl diphosphate. Glutamate 135 functions as the Proton donor in the catalytic mechanism. Threonine 173 is a (2E)-4-hydroxy-3-methylbut-2-enyl diphosphate binding site. Cysteine 203 is a binding site for [4Fe-4S] cluster. (2E)-4-hydroxy-3-methylbut-2-enyl diphosphate-binding residues include serine 231, serine 232, asparagine 233, and serine 275. Positions 231, 232, 233, and 275 each coordinate dimethylallyl diphosphate. Isopentenyl diphosphate-binding residues include serine 231, serine 232, asparagine 233, and serine 275.

It belongs to the IspH family. It depends on [4Fe-4S] cluster as a cofactor.

It catalyses the reaction isopentenyl diphosphate + 2 oxidized [2Fe-2S]-[ferredoxin] + H2O = (2E)-4-hydroxy-3-methylbut-2-enyl diphosphate + 2 reduced [2Fe-2S]-[ferredoxin] + 2 H(+). It carries out the reaction dimethylallyl diphosphate + 2 oxidized [2Fe-2S]-[ferredoxin] + H2O = (2E)-4-hydroxy-3-methylbut-2-enyl diphosphate + 2 reduced [2Fe-2S]-[ferredoxin] + 2 H(+). It participates in isoprenoid biosynthesis; dimethylallyl diphosphate biosynthesis; dimethylallyl diphosphate from (2E)-4-hydroxy-3-methylbutenyl diphosphate: step 1/1. Its pathway is isoprenoid biosynthesis; isopentenyl diphosphate biosynthesis via DXP pathway; isopentenyl diphosphate from 1-deoxy-D-xylulose 5-phosphate: step 6/6. Functionally, catalyzes the conversion of 1-hydroxy-2-methyl-2-(E)-butenyl 4-diphosphate (HMBPP) into a mixture of isopentenyl diphosphate (IPP) and dimethylallyl diphosphate (DMAPP). Acts in the terminal step of the DOXP/MEP pathway for isoprenoid precursor biosynthesis. This chain is 4-hydroxy-3-methylbut-2-enyl diphosphate reductase, found in Bordetella pertussis (strain Tohama I / ATCC BAA-589 / NCTC 13251).